We begin with the raw amino-acid sequence, 1081 residues long: Zinc finger protein 827 (1081 aa).

Residues 1–10 (MPRRKQEQPK) show a composition bias toward basic and acidic residues. A mediates direct interaction with RBBP4 region spans residues 1–14 (MPRRKQEQPKRLPS). The tract at residues 1–77 (MPRRKQEQPK…DTSLGSTTPS (77 aa)) is disordered. The short motif at 3–5 (RRK) is the RRK motif; mediates NuRD recruitment to telomeres element. Residues 62-77 (EQSTSPDTSLGSTTPS) are compositionally biased toward polar residues. Residues lysine 176, lysine 216, and lysine 226 each participate in a glycyl lysine isopeptide (Lys-Gly) (interchain with G-Cter in SUMO2) cross-link. Disordered regions lie at residues 259–278 (KVSE…ASSF) and 307–348 (SSLL…SLEL). Over residues 327–344 (VTPPPPPPPPPPPPPPPQ) the composition is skewed to pro residues. Glycyl lysine isopeptide (Lys-Gly) (interchain with G-Cter in SUMO2) cross-links involve residues lysine 360 and lysine 372. 3 consecutive C2H2-type zinc fingers follow at residues 374-396 (FQCP…MVIH), 402-424 (HQCP…MKVH), and 433-455 (FQCQ…MRCH). Residues lysine 466, lysine 475, lysine 523, lysine 549, lysine 580, lysine 587, lysine 597, lysine 634, lysine 639, and lysine 658 each participate in a glycyl lysine isopeptide (Lys-Gly) (interchain with G-Cter in SUMO2) cross-link. Lysine 673 is covalently cross-linked (Glycyl lysine isopeptide (Lys-Gly) (interchain with G-Cter in SUMO1); alternate). Lysine 673 is covalently cross-linked (Glycyl lysine isopeptide (Lys-Gly) (interchain with G-Cter in SUMO2); alternate). Residues lysine 704, lysine 710, lysine 742, lysine 778, and lysine 798 each participate in a glycyl lysine isopeptide (Lys-Gly) (interchain with G-Cter in SUMO2) cross-link. C2H2-type zinc fingers lie at residues 817 to 839 (FPCD…LSLH) and 845 to 867 (YKCH…LTVH). Residues lysine 870 and lysine 891 each participate in a glycyl lysine isopeptide (Lys-Gly) (interchain with G-Cter in SUMO2) cross-link. 2 C2H2-type zinc fingers span residues 897-919 (YSCH…MSLH) and 929-952 (ICCT…GTKH). Basic and acidic residues predominate over residues 947-960 (HIGTKHTGEDRKTP). Residues 947 to 996 (HIGTKHTGEDRKTPSESNSPSSSSLSALSDSANSKDDSDGSQKNKGGNNL) form a disordered region. Lysine 958 is covalently cross-linked (Glycyl lysine isopeptide (Lys-Gly) (interchain with G-Cter in SUMO2)). Positions 961–978 (SESNSPSSSSLSALSDSA) are enriched in low complexity. Over residues 979 to 988 (NSKDDSDGSQ) the composition is skewed to basic and acidic residues. Residue lysine 1014 forms a Glycyl lysine isopeptide (Lys-Gly) (interchain with G-Cter in SUMO2) linkage. 2 consecutive C2H2-type zinc fingers follow at residues 1019 to 1041 (FECV…LQIH) and 1047 to 1069 (FECD…KKCH).

Belongs to the krueppel C2H2-type zinc-finger protein family. In terms of assembly, part of a transcription inhibitory ribonucleoprotein complex composed at least of the circular RNA circZNF827, HNRNPK and HNRNPL. Interacts with the nucleosome remodeling and histone deacetylase/NuRD complex. Interacts with RBBP4; the interaction is direct and recruits RBBP4, a component of the NuRD complex, to telomeres.

The protein localises to the nucleus. It is found in the chromosome. The protein resides in the telomere. In terms of biological role, as part of a ribonucleoprotein complex composed at least of HNRNPK, HNRNPL and the circular RNA circZNF827 that nucleates the complex on chromatin, may negatively regulate the transcription of genes involved in neuronal differentiation. Could also recruit the nucleosome remodeling and histone deacetylase/NuRD complex to telomeric regions of chromosomes to regulate chromatin remodeling as part of telomere maintenance. This is Zinc finger protein 827 (ZNF827) from Homo sapiens (Human).